We begin with the raw amino-acid sequence, 510 residues long: MIWHVQNENFILDSTRIFMKAFHLLLFNGSFIFPECILIFGLILLLMIDSTSDQKDRPWFYFISSTSLVISITALLFRWREEPIISFSGNFQTNNFNEIFQFLILLCSTLCIPLSVEYIECTEMAITEFLLFILTATLGGMFLCGANDLITIFVAPECFSLCSYLLSGYTKRDLRSNEATMKYLLMGGASSSILVHGFSWLYGSSGGEIELQEIVNGLINTQMYNSPGISIALISITVGLGFKLSPAPFHQWTPDVYEGSPTPVVAFLSVTSKVAASASATRILDIPFYFSSNEWHLLLEILAILSMILGNLLAITQTSMKRMLAYSSIGQIGYVIIGIIVGDSNDGYASMITYMLFYISMNLGTFACIVLFGLRTGTDNIRDYAGLYTKDPFLALSLALCLLSLGGLPPLAGFFGKLYLFWCGWQAGLYFLVSIGLLTSVLSIYYYLKIIKLLMTGRNQEITPYVRNYRRSPLRSNNSIELSMTVCVIASTLPGISMNPILAIAQDTLF.

12 consecutive transmembrane segments (helical) span residues 24–44 (LLLFNGSFIFPECILIFGLIL), 59–79 (WFYFISSTSLVISITALLFRW), 99–119 (IFQFLILLCSTLCIPLSVEYI), 124–144 (MAITEFLLFILTATLGGMFLC), 149–169 (LITIFVAPECFSLCSYLLSGY), 183–203 (YLLMGGASSSILVHGFSWLYG), 229–249 (ISIALISITVGLGFKLSPAPF), 295–315 (WHLLLEILAILSMILGNLLAI), 323–343 (MLAYSSIGQIGYVIIGIIVGD), 354–374 (YMLFYISMNLGTFACIVLFGL), 395–415 (ALSLALCLLSLGGLPPLAGFF), and 418–438 (LYLFWCGWQAGLYFLVSIGLL).

It belongs to the complex I subunit 2 family. In terms of assembly, NDH is composed of at least 16 different subunits, 5 of which are encoded in the nucleus.

It localises to the plastid. Its subcellular location is the chloroplast thylakoid membrane. The enzyme catalyses a plastoquinone + NADH + (n+1) H(+)(in) = a plastoquinol + NAD(+) + n H(+)(out). It catalyses the reaction a plastoquinone + NADPH + (n+1) H(+)(in) = a plastoquinol + NADP(+) + n H(+)(out). Its function is as follows. NDH shuttles electrons from NAD(P)H:plastoquinone, via FMN and iron-sulfur (Fe-S) centers, to quinones in the photosynthetic chain and possibly in a chloroplast respiratory chain. The immediate electron acceptor for the enzyme in this species is believed to be plastoquinone. Couples the redox reaction to proton translocation, and thus conserves the redox energy in a proton gradient. This chain is NAD(P)H-quinone oxidoreductase subunit 2 B, chloroplastic, found in Lolium perenne (Perennial ryegrass).